A 413-amino-acid chain; its full sequence is Chloramphenicol resistance protein CraA (413 aa).

Helical transmembrane passes span 18–38 (LMFP…NDLI), 55–75 (WAPS…WLLG), 84–104 (KKVL…ILLT), 110–130 (FLTL…VGYA), 147–167 (LMAN…AFLI), 170–190 (VSWH…WVGL), 228–248 (ALPL…IILV), 260–280 (LAQF…IKII), 289–309 (VLIG…GVVW), 312–332 (YLIP…GISF), 349–369 (TVAA…IELV), and 373–393 (YTQF…ALWF).

Belongs to the major facilitator superfamily.

The protein localises to the cell inner membrane. Functionally, efflux pump that mediates resistance to chloramphenicol. The sequence is that of Chloramphenicol resistance protein CraA from Acinetobacter baumannii (strain ATCC 19606 / DSM 30007 / JCM 6841 / CCUG 19606 / CIP 70.34 / NBRC 109757 / NCIMB 12457 / NCTC 12156 / 81).